We begin with the raw amino-acid sequence, 418 residues long: Probable carboxypeptidase AO090166000075 (418 aa).

The signal sequence occupies residues 1 to 18 (MKATDLFHVTALVAGALA). N-linked (GlcNAc...) asparagine glycosylation occurs at N74. D147 is a Zn(2+) binding site. N168 carries N-linked (GlcNAc...) asparagine glycosylation. Residue E179 is the Proton acceptor of the active site. E180 contacts Zn(2+).

This sequence belongs to the peptidase M20A family. Zn(2+) is required as a cofactor.

The protein resides in the secreted. The sequence is that of Probable carboxypeptidase AO090166000075 from Aspergillus oryzae (strain ATCC 42149 / RIB 40) (Yellow koji mold).